The primary structure comprises 438 residues: Enolase (438 aa).

The substrate site is built by H159 and E168. Catalysis depends on E211, which acts as the Proton donor. Residues D246, E297, and D322 each contribute to the Mg(2+) site. Substrate is bound by residues E297 and D322. K347 (proton acceptor) is an active-site residue. Residues 374 to 377 and K398 each bind substrate; that span reads SHRS.

It belongs to the enolase family. As to quaternary structure, homodimer. Requires Mg(2+) as cofactor.

It is found in the cytoplasm. The catalysed reaction is (2R)-2-phosphoglycerate = phosphoenolpyruvate + H2O. It functions in the pathway carbohydrate degradation; glycolysis; pyruvate from D-glyceraldehyde 3-phosphate: step 4/5. The sequence is that of Enolase (ENO1) from Cryphonectria parasitica (Chestnut blight fungus).